Here is a 251-residue protein sequence, read N- to C-terminus: Aliphatic sulfonates import ATP-binding protein SsuB (251 aa).

An ABC transporter domain is found at 3 to 231; that stretch reads VSIDGVSKYF…PRSKTSESFQ (229 aa). Residue 39–46 coordinates ATP; that stretch reads GPSGCGKS.

This sequence belongs to the ABC transporter superfamily. Aliphatic sulfonates importer (TC 3.A.1.17.2) family. The complex is composed of two ATP-binding proteins (SsuB), two transmembrane proteins (SsuC) and a solute-binding protein (SsuA).

The protein resides in the cell membrane. It catalyses the reaction ATP + H2O + aliphatic sulfonate-[sulfonate-binding protein]Side 1 = ADP + phosphate + aliphatic sulfonateSide 2 + [sulfonate-binding protein]Side 1.. Functionally, part of the ABC transporter complex SsuABC involved in aliphatic sulfonates import. Responsible for energy coupling to the transport system. The protein is Aliphatic sulfonates import ATP-binding protein SsuB of Bacillus cereus (strain ATCC 10987 / NRS 248).